The chain runs to 72 residues: MTKEEVLEFPGIVTELLPNATFRVKLENEHEIIAHTAGRMRKNRIRVLAGDKVLVEMTPYDLTKGRITYRFK.

The region spanning 1-72 (MTKEEVLEFP…TKGRITYRFK (72 aa)) is the S1-like domain.

Belongs to the IF-1 family. In terms of assembly, component of the 30S ribosomal translation pre-initiation complex which assembles on the 30S ribosome in the order IF-2 and IF-3, IF-1 and N-formylmethionyl-tRNA(fMet); mRNA recruitment can occur at any time during PIC assembly.

The protein resides in the cytoplasm. In terms of biological role, one of the essential components for the initiation of protein synthesis. Stabilizes the binding of IF-2 and IF-3 on the 30S subunit to which N-formylmethionyl-tRNA(fMet) subsequently binds. Helps modulate mRNA selection, yielding the 30S pre-initiation complex (PIC). Upon addition of the 50S ribosomal subunit IF-1, IF-2 and IF-3 are released leaving the mature 70S translation initiation complex. This Agrobacterium fabrum (strain C58 / ATCC 33970) (Agrobacterium tumefaciens (strain C58)) protein is Translation initiation factor IF-1.